We begin with the raw amino-acid sequence, 171 residues long: Shikimate kinase (171 aa).

14 to 19 serves as a coordination point for ATP; that stretch reads GAGKST. Serine 18 lines the Mg(2+) pocket. Positions 36, 60, and 82 each coordinate substrate. Residue arginine 120 coordinates ATP. Arginine 139 is a substrate binding site. Glutamine 156 lines the ATP pocket.

This sequence belongs to the shikimate kinase family. In terms of assembly, monomer. Mg(2+) is required as a cofactor.

The protein resides in the cytoplasm. It catalyses the reaction shikimate + ATP = 3-phosphoshikimate + ADP + H(+). It functions in the pathway metabolic intermediate biosynthesis; chorismate biosynthesis; chorismate from D-erythrose 4-phosphate and phosphoenolpyruvate: step 5/7. Catalyzes the specific phosphorylation of the 3-hydroxyl group of shikimic acid using ATP as a cosubstrate. This is Shikimate kinase from Alteromonas mediterranea (strain DSM 17117 / CIP 110805 / LMG 28347 / Deep ecotype).